An 866-amino-acid polypeptide reads, in one-letter code: Rifampicin phosphotransferase (866 aa).

The ATP-binding stretch occupies residues 1–313 (MSSLVLGLHE…FYIVQSRPIT (313 aa)). ATP-binding residues include lysine 22, arginine 116, glycine 131, threonine 135, glutamine 182, glutamate 296, glutamine 308, and arginine 310. Residues 326-754 (NHVYISVGHQ…TSDGEIVTGE (429 aa)) form a rifampicin-binding region. The segment at 410-429 (IPNDKTAPNPSRGNADMPAQ) is disordered. Residues 767–865 (GLPVSSGVIE…VHGTEGYIEI (99 aa)) are swivel phosphohistidine. Histidine 825 acts as the Tele-phosphohistidine intermediate in catalysis.

It belongs to the rifampicin phosphotransferase family.

It carries out the reaction rifampicin + ATP + H2O = 21-phosphorifampicin + AMP + phosphate + 2 H(+). Its function is as follows. Catalyzes the phosphorylation of rifampicin, also known as rifampin (RIF), leading to its inactivation. This chain is Rifampicin phosphotransferase, found in Bacillus subtilis (strain 168).